Here is a 320-residue protein sequence, read N- to C-terminus: Ferrochelatase (320 aa).

Residues histidine 194 and glutamate 275 each contribute to the Fe cation site.

This sequence belongs to the ferrochelatase family.

It is found in the cytoplasm. The catalysed reaction is heme b + 2 H(+) = protoporphyrin IX + Fe(2+). Its pathway is porphyrin-containing compound metabolism; protoheme biosynthesis; protoheme from protoporphyrin-IX: step 1/1. Catalyzes the ferrous insertion into protoporphyrin IX. This chain is Ferrochelatase, found in Yersinia pestis bv. Antiqua (strain Antiqua).